The sequence spans 320 residues: Putative protein FRMPD2-like (320 aa).

PDZ domains lie at 1–46 (MTSI…ERRV) and 90–178 (EVKL…CRPP). The tract at residues 215–239 (DQEDSWRDSASPDAGEGLGLRPESS) is disordered.

This Homo sapiens (Human) protein is Putative protein FRMPD2-like.